Consider the following 239-residue polypeptide: Probable 2-phosphosulfolactate phosphatase (239 aa).

Belongs to the ComB family. It depends on Mg(2+) as a cofactor.

It carries out the reaction (2R)-O-phospho-3-sulfolactate + H2O = (2R)-3-sulfolactate + phosphate. The polypeptide is Probable 2-phosphosulfolactate phosphatase (Clostridium botulinum (strain Kyoto / Type A2)).